The primary structure comprises 220 residues: Octanoyltransferase (220 aa).

The BPL/LPL catalytic domain maps to 36–212 (ADSPDQFWLV…CLARQLGRRL (177 aa)). Substrate-binding positions include 75-82 (RGGQVTYH), 142-144 (SLG), and 155-157 (GVA). Cysteine 173 serves as the catalytic Acyl-thioester intermediate.

It belongs to the LipB family.

It localises to the cytoplasm. The enzyme catalyses octanoyl-[ACP] + L-lysyl-[protein] = N(6)-octanoyl-L-lysyl-[protein] + holo-[ACP] + H(+). Its pathway is protein modification; protein lipoylation via endogenous pathway; protein N(6)-(lipoyl)lysine from octanoyl-[acyl-carrier-protein]: step 1/2. Functionally, catalyzes the transfer of endogenously produced octanoic acid from octanoyl-acyl-carrier-protein onto the lipoyl domains of lipoate-dependent enzymes. Lipoyl-ACP can also act as a substrate although octanoyl-ACP is likely to be the physiological substrate. The sequence is that of Octanoyltransferase from Chromohalobacter salexigens (strain ATCC BAA-138 / DSM 3043 / CIP 106854 / NCIMB 13768 / 1H11).